A 187-amino-acid polypeptide reads, in one-letter code: Peptidyl-tRNA hydrolase (187 aa).

TRNA is bound at residue Tyr-18. His-23 acts as the Proton acceptor in catalysis. TRNA-binding residues include Phe-65, Asn-67, and Asn-113.

Belongs to the PTH family. Monomer.

The protein resides in the cytoplasm. The enzyme catalyses an N-acyl-L-alpha-aminoacyl-tRNA + H2O = an N-acyl-L-amino acid + a tRNA + H(+). Its function is as follows. Hydrolyzes ribosome-free peptidyl-tRNAs (with 1 or more amino acids incorporated), which drop off the ribosome during protein synthesis, or as a result of ribosome stalling. Functionally, catalyzes the release of premature peptidyl moieties from peptidyl-tRNA molecules trapped in stalled 50S ribosomal subunits, and thus maintains levels of free tRNAs and 50S ribosomes. The polypeptide is Peptidyl-tRNA hydrolase (Coxiella burnetii (strain RSA 331 / Henzerling II)).